A 387-amino-acid polypeptide reads, in one-letter code: MKWLLLLSLVALSECLYKVSLIKKKSLRKNLIEHGLLKDFLKNNTLDPASKYFPQGEAATMIANQPLVNYLDMEYFGTIGIGTPAQEFTVIFDTGSSNLWVPSIYCSSPACTNHNRFNPQESSTYQATSQTLSIAYGTGSMTGILGYDTVQVGGIADTNQIFGLSETEPGSFLYYSPFDGILGLAYPSISSSGATPVFDNIWNQDLVSQDLFSVYLSSNDQSGSVVMFGGIDSSYYTGSLNWVPVSAEGYWQITVDSITMNGEAIACAEGCQAIVDTGTSLLSGPTSPIANIQSYIGASENSNGEMVVSCSAISSLPDIVFTINGIQYPVPASAYILQDEGGCTSGFQGMNIPTAYGELWILGDVFIRQYFAVFDRANNQVGLAPVA.

The signal sequence occupies residues 1–15 (MKWLLLLSLVALSEC). A propeptide spans 16 to 61 (LYKVSLIKKKSLRKNLIEHGLLKDFLKNNTLDPASKYFPQGEAATM) (activation peptide). One can recognise a Peptidase A1 domain in the interval 75-384 (YFGTIGIGTP…DRANNQVGLA (310 aa)). Aspartate 93 is an active-site residue. Cysteine 106 and cysteine 111 form a disulfide bridge. Phosphoserine is present on serine 129. Cysteine 267 and cysteine 271 are joined by a disulfide. Aspartate 276 is a catalytic residue. Residues cysteine 310 and cysteine 343 are joined by a disulfide bond.

The protein belongs to the peptidase A1 family.

The protein resides in the secreted. The catalysed reaction is Preferential cleavage: hydrophobic, preferably aromatic, residues in P1 and P1' positions. Cleaves 1-Phe-|-Val-2, 4-Gln-|-His-5, 13-Glu-|-Ala-14, 14-Ala-|-Leu-15, 15-Leu-|-Tyr-16, 16-Tyr-|-Leu-17, 23-Gly-|-Phe-24, 24-Phe-|-Phe-25 and 25-Phe-|-Tyr-26 bonds in the B chain of insulin.. Its activity is regulated as follows. Inhibited by pepstatin. Shows particularly broad specificity; although bonds involving phenylalanine and leucine are preferred, many others are also cleaved to some extent. The polypeptide is Pepsin A (PGA) (Callithrix jacchus (White-tufted-ear marmoset)).